The chain runs to 194 residues: Large ribosomal subunit protein uL10 (194 aa).

Positions 172 to 187 (EGGAAEAPAEAATEAP) are enriched in low complexity. The segment at 172 to 194 (EGGAAEAPAEAATEAPAEAEAES) is disordered.

Belongs to the universal ribosomal protein uL10 family. As to quaternary structure, part of the ribosomal stalk of the 50S ribosomal subunit. The N-terminus interacts with L11 and the large rRNA to form the base of the stalk. The C-terminus forms an elongated spine to which L12 dimers bind in a sequential fashion forming a multimeric L10(L12)X complex.

Functionally, forms part of the ribosomal stalk, playing a central role in the interaction of the ribosome with GTP-bound translation factors. The chain is Large ribosomal subunit protein uL10 from Rhodococcus erythropolis (strain PR4 / NBRC 100887).